The sequence spans 184 residues: Isopentenyl-diphosphate Delta-isomerase (184 aa).

Residues H26 and H33 each coordinate Mn(2+). One can recognise a Nudix hydrolase domain in the interval 31–165 (PLHLAFSCYL…PSAFSPWLGL (135 aa)). Residue C68 is part of the active site. H70 serves as a coordination point for Mn(2+). Mg(2+) is bound at residue E88. Residues E115 and E117 each coordinate Mn(2+). E117 is a catalytic residue.

The protein belongs to the IPP isomerase type 1 family. Mg(2+) serves as cofactor. Mn(2+) is required as a cofactor.

The protein localises to the cytoplasm. It catalyses the reaction isopentenyl diphosphate = dimethylallyl diphosphate. The protein operates within isoprenoid biosynthesis; dimethylallyl diphosphate biosynthesis; dimethylallyl diphosphate from isopentenyl diphosphate: step 1/1. Functionally, catalyzes the 1,3-allylic rearrangement of the homoallylic substrate isopentenyl (IPP) to its highly electrophilic allylic isomer, dimethylallyl diphosphate (DMAPP). The protein is Isopentenyl-diphosphate Delta-isomerase of Paenarthrobacter aurescens (strain TC1).